The following is an 865-amino-acid chain: Alanine--tRNA ligase (865 aa).

Zn(2+) is bound by residues H552, H556, C654, and H658.

The protein belongs to the class-II aminoacyl-tRNA synthetase family. Zn(2+) serves as cofactor.

The protein resides in the cytoplasm. It carries out the reaction tRNA(Ala) + L-alanine + ATP = L-alanyl-tRNA(Ala) + AMP + diphosphate. Catalyzes the attachment of alanine to tRNA(Ala) in a two-step reaction: alanine is first activated by ATP to form Ala-AMP and then transferred to the acceptor end of tRNA(Ala). Also edits incorrectly charged Ser-tRNA(Ala) and Gly-tRNA(Ala) via its editing domain. The sequence is that of Alanine--tRNA ligase from Coxiella burnetii (strain RSA 331 / Henzerling II).